A 227-amino-acid polypeptide reads, in one-letter code: 7-cyano-7-deazaguanine synthase (227 aa).

8 to 18 (LSGGTDSATVL) is a binding site for ATP. 4 residues coordinate Zn(2+): cysteine 192, cysteine 202, cysteine 205, and cysteine 208.

The protein belongs to the QueC family. Zn(2+) is required as a cofactor.

It carries out the reaction 7-carboxy-7-deazaguanine + NH4(+) + ATP = 7-cyano-7-deazaguanine + ADP + phosphate + H2O + H(+). It functions in the pathway purine metabolism; 7-cyano-7-deazaguanine biosynthesis. Catalyzes the ATP-dependent conversion of 7-carboxy-7-deazaguanine (CDG) to 7-cyano-7-deazaguanine (preQ(0)). The chain is 7-cyano-7-deazaguanine synthase from Rickettsia prowazekii (strain Madrid E).